The following is a 555-amino-acid chain: Probable Xaa-Pro aminopeptidase BC1G_13431 (555 aa).

D303, D314, E458, and E499 together coordinate Mn(2+). Positions 527–555 are disordered; that stretch reads EGKEQEEEEEREANRKATESRKQKKTWFW. Residues 538–547 are compositionally biased toward basic and acidic residues; the sequence is EANRKATESR.

It belongs to the peptidase M24B family. Mn(2+) is required as a cofactor.

It catalyses the reaction Release of any N-terminal amino acid, including proline, that is linked to proline, even from a dipeptide or tripeptide.. In terms of biological role, catalyzes the removal of a penultimate prolyl residue from the N-termini of peptides. In Botryotinia fuckeliana (strain B05.10) (Noble rot fungus), this protein is Probable Xaa-Pro aminopeptidase BC1G_13431.